A 299-amino-acid polypeptide reads, in one-letter code: Very long chain fatty acid elongase 5 (299 aa).

Met1 carries the post-translational modification N-acetylmethionine. 6 helical membrane-spanning segments follow: residues Trp26 to Val46, Ile64 to Val84, Val112 to Leu132, Met150 to Ala170, Gly205 to Cys225, and Thr226 to Phe246. Residues Ala275–Asp299 are disordered. Residues Gly279–Glu288 are compositionally biased toward polar residues. At Ser285 the chain carries Phosphoserine.

This sequence belongs to the ELO family. ELOVL5 subfamily. In terms of assembly, interacts with TECR.

The protein localises to the endoplasmic reticulum membrane. It localises to the cell projection. The protein resides in the dendrite. The enzyme catalyses a very-long-chain acyl-CoA + malonyl-CoA + H(+) = a very-long-chain 3-oxoacyl-CoA + CO2 + CoA. The catalysed reaction is (6Z,9Z,12Z)-octadecatrienoyl-CoA + malonyl-CoA + H(+) = (8Z,11Z,14Z)-3-oxoeicosatrienoyl-CoA + CO2 + CoA. It catalyses the reaction (9Z,12Z,15Z)-octadecatrienoyl-CoA + malonyl-CoA + H(+) = (11Z,14Z,17Z)-3-oxoeicosatrienoyl-CoA + CO2 + CoA. It carries out the reaction (9Z)-hexadecenoyl-CoA + malonyl-CoA + H(+) = 3-oxo-(11Z)-octadecenoyl-CoA + CO2 + CoA. The enzyme catalyses (9Z)-octadecenoyl-CoA + malonyl-CoA + H(+) = 3-oxo-(11Z)-eicosenoyl-CoA + CO2 + CoA. The catalysed reaction is (11Z)-octadecenoyl-CoA + malonyl-CoA + H(+) = 3-oxo-(13Z)-eicosenoyl-CoA + CO2 + CoA. It catalyses the reaction (9Z,12Z)-octadecadienoyl-CoA + malonyl-CoA + H(+) = (11Z,14Z)-3-oxoicosa-11,14-dienoyl-CoA + CO2 + CoA. It carries out the reaction (6Z,9Z,12Z,15Z)-octadecatetraenoyl-CoA + malonyl-CoA + H(+) = (8Z,11Z,14Z,17Z)-3-oxoicosatetraenoyl-CoA + CO2 + CoA. The enzyme catalyses (5Z,8Z,11Z,14Z)-eicosatetraenoyl-CoA + malonyl-CoA + H(+) = (7Z,10Z,13Z,16Z)-3-oxodocosatetraenoyl-CoA + CO2 + CoA. The catalysed reaction is (5Z,8Z,11Z,14Z,17Z)-eicosapentaenoyl-CoA + malonyl-CoA + H(+) = 3-oxo-(7Z,10Z,13Z,16Z,19Z)-docosapentaenoyl-CoA + CO2 + CoA. It functions in the pathway lipid metabolism; polyunsaturated fatty acid biosynthesis. In terms of biological role, catalyzes the first and rate-limiting reaction of the four reactions that constitute the long-chain fatty acids elongation cycle. This endoplasmic reticulum-bound enzymatic process allows the addition of 2 carbons to the chain of long- and very long-chain fatty acids (VLCFAs) per cycle. Condensing enzyme that acts specifically toward polyunsaturated acyl-CoA with the higher activity toward C18:3(n-6) acyl-CoA. May participate in the production of monounsaturated and of polyunsaturated VLCFAs of different chain lengths that are involved in multiple biological processes as precursors of membrane lipids and lipid mediators. In conditions where the essential linoleic and alpha linoleic fatty acids are lacking it is also involved in the synthesis of Mead acid from oleic acid. The chain is Very long chain fatty acid elongase 5 from Macaca fascicularis (Crab-eating macaque).